A 306-amino-acid chain; its full sequence is GTPase Era (306 aa).

Positions lysine 14–glutamate 181 constitute an Era-type G domain. Residues glycine 22–serine 29 are G1. Residue glycine 22–serine 29 participates in GTP binding. The interval glutamine 48–asparagine 52 is G2. Positions aspartate 69–glycine 72 are G3. GTP contacts are provided by residues aspartate 69–isoleucine 73 and asparagine 131–aspartate 134. Positions asparagine 131–aspartate 134 are G4. The tract at residues isoleucine 160–alanine 162 is G5. The KH type-2 domain occupies threonine 212–lysine 290.

Belongs to the TRAFAC class TrmE-Era-EngA-EngB-Septin-like GTPase superfamily. Era GTPase family. Monomer.

The protein resides in the cytoplasm. Its subcellular location is the cell inner membrane. An essential GTPase that binds both GDP and GTP, with rapid nucleotide exchange. Plays a role in 16S rRNA processing and 30S ribosomal subunit biogenesis and possibly also in cell cycle regulation and energy metabolism. The protein is GTPase Era of Syntrophus aciditrophicus (strain SB).